Consider the following 173-residue polypeptide: 2-C-methyl-D-erythritol 2,4-cyclodiphosphate synthase (173 aa).

A divalent metal cation contacts are provided by aspartate 17 and histidine 19. 4-CDP-2-C-methyl-D-erythritol 2-phosphate is bound by residues 17–19 and 49–50; these read DVH and HS. An a divalent metal cation-binding site is contributed by histidine 57. Residues 76–80, 147–150, and arginine 157 contribute to the 4-CDP-2-C-methyl-D-erythritol 2-phosphate site; these read FPNTD and TTTE.

It belongs to the IspF family. In terms of assembly, homotrimer. A divalent metal cation is required as a cofactor.

The catalysed reaction is 4-CDP-2-C-methyl-D-erythritol 2-phosphate = 2-C-methyl-D-erythritol 2,4-cyclic diphosphate + CMP. Its pathway is isoprenoid biosynthesis; isopentenyl diphosphate biosynthesis via DXP pathway; isopentenyl diphosphate from 1-deoxy-D-xylulose 5-phosphate: step 4/6. Involved in the biosynthesis of isopentenyl diphosphate (IPP) and dimethylallyl diphosphate (DMAPP), two major building blocks of isoprenoid compounds. Catalyzes the conversion of 4-diphosphocytidyl-2-C-methyl-D-erythritol 2-phosphate (CDP-ME2P) to 2-C-methyl-D-erythritol 2,4-cyclodiphosphate (ME-CPP) with a corresponding release of cytidine 5-monophosphate (CMP). This is 2-C-methyl-D-erythritol 2,4-cyclodiphosphate synthase from Ehrlichia ruminantium (strain Gardel).